Reading from the N-terminus, the 268-residue chain is Undecaprenyl-diphosphatase (268 aa).

Helical transmembrane passes span 4 to 24 (STTL…FIPV), 50 to 70 (IQLG…VSVI), 84 to 104 (VAVL…HGFI), 109 to 129 (FETP…LLFV), 144 to 164 (LPLN…VPGV), 185 to 205 (AEFS…FDLF), 214 to 234 (SALG…VLVV), and 247 to 267 (ALFG…LLAG).

This sequence belongs to the UppP family.

The protein localises to the cell inner membrane. It catalyses the reaction di-trans,octa-cis-undecaprenyl diphosphate + H2O = di-trans,octa-cis-undecaprenyl phosphate + phosphate + H(+). Catalyzes the dephosphorylation of undecaprenyl diphosphate (UPP). Confers resistance to bacitracin. This Cereibacter sphaeroides (strain ATCC 17029 / ATH 2.4.9) (Rhodobacter sphaeroides) protein is Undecaprenyl-diphosphatase.